Reading from the N-terminus, the 427-residue chain is MASVIIVGTQWGDEGKGKIVDYLAENCEYVVRSQGGSNAGHTVVVDNIKYKLRLLPSGILHKDKVCVIGNGVVIEPKVFLSEIDSLIEKKVNISNLKISDRAHVLMPYHKILDELQEEDLGENKLGTTKNGIGPCYMDKSSRLGIRIVDLMNKETFAKKLKFNVELKNKLLKKLYNHDGVNYDELLKEYLGYAEKLRPFVADTTTILNKAIKEKKNILFEGAQATMLDLDHGTYPFVTSSYPAAGGACTGSGVGPRKIDNVIGVVKAYATRVGEGPFPSELFDDVGQFIRDKGGEYGTVTGRARRCGWLDACVVKYASYVNGLDSIAITRLDILDELDKLKICVAYKYNSEILEGYPADLDILSKVEPVYEEFEGWKTSTRDIREYDKLPENAKKYLKRLSEVIETDISIVSVGAGRDETIIVKKIF.

GTP is bound by residues 12–18 (GDEGKGK) and 40–42 (GHT). The active-site Proton acceptor is the D13. D13 and G40 together coordinate Mg(2+). IMP contacts are provided by residues 13-16 (DEGK), 38-41 (NAGH), T128, R142, Q223, T238, and R302. Catalysis depends on H41, which acts as the Proton donor. 298–304 (TVTGRAR) provides a ligand contact to substrate. GTP contacts are provided by residues R304, 330–332 (RLD), and 412–414 (SVG).

Belongs to the adenylosuccinate synthetase family. As to quaternary structure, homodimer. Requires Mg(2+) as cofactor.

The protein resides in the cytoplasm. The catalysed reaction is IMP + L-aspartate + GTP = N(6)-(1,2-dicarboxyethyl)-AMP + GDP + phosphate + 2 H(+). Its pathway is purine metabolism; AMP biosynthesis via de novo pathway; AMP from IMP: step 1/2. In terms of biological role, plays an important role in the de novo pathway of purine nucleotide biosynthesis. Catalyzes the first committed step in the biosynthesis of AMP from IMP. The sequence is that of Adenylosuccinate synthetase from Brachyspira hyodysenteriae (strain ATCC 49526 / WA1).